The chain runs to 474 residues: 3-isopropylmalate dehydratase large subunit (474 aa).

3 residues coordinate [4Fe-4S] cluster: cysteine 353, cysteine 413, and cysteine 416.

It belongs to the aconitase/IPM isomerase family. LeuC type 1 subfamily. In terms of assembly, heterodimer of LeuC and LeuD. The cofactor is [4Fe-4S] cluster.

It carries out the reaction (2R,3S)-3-isopropylmalate = (2S)-2-isopropylmalate. The protein operates within amino-acid biosynthesis; L-leucine biosynthesis; L-leucine from 3-methyl-2-oxobutanoate: step 2/4. Catalyzes the isomerization between 2-isopropylmalate and 3-isopropylmalate, via the formation of 2-isopropylmaleate. This is 3-isopropylmalate dehydratase large subunit from Roseiflexus sp. (strain RS-1).